The chain runs to 685 residues: DNA-directed RNA polymerase subunit beta' (685 aa).

The Zn(2+) site is built by Cys69, Cys71, Cys87, and Cys90. Mg(2+) is bound by residues Asp489, Asp491, and Asp493.

The protein belongs to the RNA polymerase beta' chain family. RpoC1 subfamily. In terms of assembly, in plastids the minimal PEP RNA polymerase catalytic core is composed of four subunits: alpha, beta, beta', and beta''. When a (nuclear-encoded) sigma factor is associated with the core the holoenzyme is formed, which can initiate transcription. It depends on Mg(2+) as a cofactor. Requires Zn(2+) as cofactor.

Its subcellular location is the plastid. It is found in the chloroplast. The enzyme catalyses RNA(n) + a ribonucleoside 5'-triphosphate = RNA(n+1) + diphosphate. Its function is as follows. DNA-dependent RNA polymerase catalyzes the transcription of DNA into RNA using the four ribonucleoside triphosphates as substrates. This is DNA-directed RNA polymerase subunit beta' from Buxus microphylla (Littleleaf boxwood).